Consider the following 304-residue polypeptide: N-acetylmuramic acid 6-phosphate etherase (304 aa).

Ser-2 is modified (phosphoserine). An SIS domain is found at 59 to 222; sequence AYESFQNGGR…STAVMVKIGK (164 aa). Glu-87 acts as the Proton donor in catalysis. Glu-118 is a catalytic residue.

The protein belongs to the GCKR-like family. MurNAc-6-P etherase subfamily. As to quaternary structure, homodimer.

The catalysed reaction is N-acetyl-D-muramate 6-phosphate + H2O = N-acetyl-D-glucosamine 6-phosphate + (R)-lactate. The protein operates within amino-sugar metabolism; N-acetylmuramate degradation. Functionally, specifically catalyzes the cleavage of the D-lactyl ether substituent of MurNAc 6-phosphate, producing GlcNAc 6-phosphate and D-lactate. The sequence is that of N-acetylmuramic acid 6-phosphate etherase from Bacillus subtilis (strain 168).